The primary structure comprises 351 residues: AT-hook motif nuclear-localized protein 10 (351 aa).

The tract at residues 1-151 (MSGSETGLMA…RPPGSSSKRL (151 aa)) is disordered. The span at 23–37 (HQQQQHSQAQPQQSQ) shows a compositional bias: low complexity. The span at 60 to 77 (SPPQQYQPNSAGENSVLN) shows a compositional bias: polar residues. The Bipartite nuclear localization signal motif lies at 97 to 105 (KKRRGRPRK). DNA-binding regions (a.T hook) lie at residues 97–109 (KKRRGRPRKYGPD) and 138–149 (KKRGRPPGSSSK). Residues 159–301 (TGIGFTPHVL…QMGLSSPVLP (143 aa)) enclose the PPC domain. 2 stretches are compositionally biased toward polar residues: residues 310 to 325 (MTPSSPQSRGTMSESS) and 334 to 351 (IHQSTGGPYNNTINMPWK). Residues 310–351 (MTPSSPQSRGTMSESSCGGGHGSPIHQSTGGPYNNTINMPWK) form a disordered region.

The protein resides in the nucleus. Transcription factor that specifically binds AT-rich DNA sequences related to the nuclear matrix attachment regions (MARs). This chain is AT-hook motif nuclear-localized protein 10, found in Arabidopsis thaliana (Mouse-ear cress).